A 189-amino-acid chain; its full sequence is Protein C1orf43 homolog (189 aa).

A helical transmembrane segment spans residues 11–31 (VNVVLVMAYGSLVFVLLFIFV).

Its subcellular location is the membrane. It is found in the golgi apparatus. The protein localises to the mitochondrion. General regulator of phagocytosis. Required to uptake Gram negative bacterium by macrophages. This Pongo abelii (Sumatran orangutan) protein is Protein C1orf43 homolog.